Consider the following 254-residue polypeptide: UPF0603 protein YdjH (254 aa).

A signal peptide spans 1-29 (MRGFFGKAIFVVLAVFIMMPLLGIEAVRA). A helical membrane pass occupies residues 166–186 (IFFTWWFQLIAAIAVGGIAVS). The span at 223–235 (VTRERKPSDKDSG) shows a compositional bias: basic and acidic residues. Positions 223-254 (VTRERKPSDKDSGSDGGVTKGGTSYSGSRGSF) are disordered. A compositionally biased stretch (polar residues) spans 243–254 (GGTSYSGSRGSF).

Belongs to the UPF0603 family.

The protein resides in the cell membrane. This chain is UPF0603 protein YdjH (ydjH), found in Bacillus subtilis (strain 168).